Reading from the N-terminus, the 254-residue chain is Putative cysteine-rich repeat secretory protein 37 (254 aa).

The N-terminal stretch at 1-29 (MYSSYSLSKRLVSIPILAIQLLLIRSVSS) is a signal peptide. Gnk2-homologous domains lie at 36-138 (YLNH…SIRS) and 145-251 (YRNV…LYPF).

Belongs to the cysteine-rich repeat secretory protein family.

The protein resides in the secreted. The protein is Putative cysteine-rich repeat secretory protein 37 (CRRSP37) of Arabidopsis thaliana (Mouse-ear cress).